The sequence spans 335 residues: Ketol-acid reductoisomerase (NAD(P)(+)) (335 aa).

One can recognise a KARI N-terminal Rossmann domain in the interval 5–185; it reads AKIYTDKDTT…GGTRAGAIET (181 aa). NADP(+) contacts are provided by residues 28-31, R52, S56, and 86-89; these read YGSQ and DMAQ. H111 is a catalytic residue. G137 contacts NADP(+). The KARI C-terminal knotted domain maps to 186 to 331; it reads TFKEETETDL…RRLKEIIERG (146 aa). Residues D194, E198, E230, and E234 each coordinate Mg(2+). S255 contacts substrate. Positions 301-335 are disordered; the sequence is GSPTLSKGLEEMDKSLEEQTGRRLKEIIERGRPKS. Positions 308–335 are enriched in basic and acidic residues; that stretch reads GLEEMDKSLEEQTGRRLKEIIERGRPKS.

This sequence belongs to the ketol-acid reductoisomerase family. Requires Mg(2+) as cofactor.

The enzyme catalyses (2R)-2,3-dihydroxy-3-methylbutanoate + NAD(+) = (2S)-2-acetolactate + NADH + H(+). It carries out the reaction (2R)-2,3-dihydroxy-3-methylbutanoate + NADP(+) = (2S)-2-acetolactate + NADPH + H(+). It participates in amino-acid biosynthesis; L-isoleucine biosynthesis; L-isoleucine from 2-oxobutanoate: step 2/4. The protein operates within amino-acid biosynthesis; L-valine biosynthesis; L-valine from pyruvate: step 2/4. Involved in the biosynthesis of branched-chain amino acids (BCAA). Catalyzes an alkyl-migration followed by a ketol-acid reduction of (S)-2-acetolactate (S2AL) to yield (R)-2,3-dihydroxy-isovalerate. In the isomerase reaction, S2AL is rearranged via a Mg-dependent methyl migration to produce 3-hydroxy-3-methyl-2-ketobutyrate (HMKB). In the reductase reaction, this 2-ketoacid undergoes a metal-dependent reduction by NADPH or NADH to yield (R)-2,3-dihydroxy-isovalerate. This Metallosphaera sedula (strain ATCC 51363 / DSM 5348 / JCM 9185 / NBRC 15509 / TH2) protein is Ketol-acid reductoisomerase (NAD(P)(+)).